Here is a 506-residue protein sequence, read N- to C-terminus: Probable alpha-L-arabinofuranosidase B (506 aa).

A signal peptide spans 1–26 (MLPQLSIERASVFALGLIATGSLVVA). A catalytic region spans residues 27–343 (GPCDIYSAGG…ANIVAAKYAT (317 aa)). 3 disulfide bridges follow: cysteine 29–cysteine 39, cysteine 89–cysteine 94, and cysteine 184–cysteine 185. A substrate-binding site is contributed by aspartate 227. Glutamate 229 functions as the Nucleophile in the catalytic mechanism. Asparagine 230 provides a ligand contact to substrate. The N-linked (GlcNAc...) asparagine glycan is linked to asparagine 240. Glycine 304 contacts substrate. Aspartate 305 (proton donor) is an active-site residue. Positions 344–506 (ASLTSGPKLT…VSWVISTGFA (163 aa)) are ABD. Cysteine 409 and cysteine 447 are disulfide-bonded. Positions 424, 426, 427, 443, 471, 476, and 496 each coordinate substrate.

Belongs to the glycosyl hydrolase 54 family.

The protein localises to the secreted. The enzyme catalyses Hydrolysis of terminal non-reducing alpha-L-arabinofuranoside residues in alpha-L-arabinosides.. Its pathway is glycan metabolism; L-arabinan degradation. Alpha-L-arabinofuranosidase involved in the degradation of arabinoxylan, a major component of plant hemicellulose. Able to hydrolyze 1,5-, 1,3- and 1,2-alpha-linkages not only in L-arabinofuranosyl oligosaccharides, but also in polysaccharides containing terminal non-reducing L-arabinofuranoses in side chains, like L-arabinan, arabinogalactan and arabinoxylan. This chain is Probable alpha-L-arabinofuranosidase B (abfB), found in Aspergillus fumigatus (strain ATCC MYA-4609 / CBS 101355 / FGSC A1100 / Af293) (Neosartorya fumigata).